A 196-amino-acid polypeptide reads, in one-letter code: Aliphatic amidase regulator (196 aa).

Positions 129-190 constitute an ANTAR domain; that stretch reads MAKLKQKTEQ…PILKIAQELL (62 aa).

As to quaternary structure, forms a complex with AmiC.

Positive controlling element of AmiE, the gene for aliphatic amidase. Acts as a transcriptional antitermination factor. It is thought to allow RNA polymerase read through a rho-independent transcription terminator between the AmiE promoter and gene. The protein is Aliphatic amidase regulator (amiR) of Pseudomonas aeruginosa (strain ATCC 15692 / DSM 22644 / CIP 104116 / JCM 14847 / LMG 12228 / 1C / PRS 101 / PAO1).